Here is a 145-residue protein sequence, read N- to C-terminus: Large ribosomal subunit protein bL19 (145 aa).

It belongs to the bacterial ribosomal protein bL19 family.

This protein is located at the 30S-50S ribosomal subunit interface and may play a role in the structure and function of the aminoacyl-tRNA binding site. In Brucella abortus (strain S19), this protein is Large ribosomal subunit protein bL19.